Consider the following 228-residue polypeptide: MMRVSYHGHSVVKIETNGKVILIDPFLTGNPKTDLKAEDVKVDAIILSHGHGDHVGDTVALAKNNNAVVVAPFELATFLGWQGVNTHPMHIGGSHEFDFGKVKFTQAFHGSSYIDEENKTITYTGMPAGILFTAEEKTVYHAGDTALFSDMKLIGELNNIDVAFLPIGDNFTMGPEDAVLAAKWIEAKTVVPMHYNTFPVIEQDPYQFVEKLQNCTGKVLEAGESITL.

The protein belongs to the UPF0173 family.

This chain is UPF0173 metal-dependent hydrolase BcerKBAB4_4442, found in Bacillus mycoides (strain KBAB4) (Bacillus weihenstephanensis).